Reading from the N-terminus, the 141-residue chain is ATP synthase epsilon chain (141 aa).

The protein belongs to the ATPase epsilon chain family. F-type ATPases have 2 components, CF(1) - the catalytic core - and CF(0) - the membrane proton channel. CF(1) has five subunits: alpha(3), beta(3), gamma(1), delta(1), epsilon(1). CF(0) has three main subunits: a, b and c.

It is found in the cell inner membrane. Produces ATP from ADP in the presence of a proton gradient across the membrane. The protein is ATP synthase epsilon chain (atpC) of Acidithiobacillus ferridurans.